A 457-amino-acid polypeptide reads, in one-letter code: Glutamate--tRNA ligase 2 (457 aa).

The 'HIGH' region signature appears at 8-18; sequence PSPTGYIHIGN. Positions 249–253 match the 'KMSKS' region motif; that stretch reads GFSKR. Residue K252 coordinates ATP.

The protein belongs to the class-I aminoacyl-tRNA synthetase family. Glutamate--tRNA ligase type 1 subfamily. In terms of assembly, monomer.

It is found in the cytoplasm. It catalyses the reaction tRNA(Glu) + L-glutamate + ATP = L-glutamyl-tRNA(Glu) + AMP + diphosphate. Catalyzes the attachment of glutamate to tRNA(Glu) in a two-step reaction: glutamate is first activated by ATP to form Glu-AMP and then transferred to the acceptor end of tRNA(Glu). In Bartonella tribocorum (strain CIP 105476 / IBS 506), this protein is Glutamate--tRNA ligase 2.